The chain runs to 687 residues: Cytochrome b/c1 (687 aa).

Residues 46-66 form a helical membrane-spanning segment; the sequence is FGAILSFMLGMQILTGVILAM. Residues His-96 and His-110 each coordinate heme b. 2 helical membrane-spanning segments follow: residues 126 to 146 and 160 to 180; these read VLWI…FMGY and VITN…TLLW. Residues His-197 and His-211 each coordinate heme b. 6 consecutive transmembrane segments (helical) span residues 199-219, 247-267, 305-325, 337-357, 363-383, and 410-430; these read LLPF…HVAG, FGVA…PNYL, LAGV…PWLD, LAKQ…YLGA, IYVI…LIVL, and AVAS…GSLQ. Residues 404 to 434 are internal signal sequence; sequence LAKGGKAVASVAIALVAAGALFLGSLQDARA. The Cytochrome c domain maps to 458-643; it reads GALQRGLKVY…TVAQYSKDVT (186 aa). Cys-471, Cys-474, His-475, and Met-616 together coordinate heme c. The helical transmembrane segment at 666–678 threads the bilayer; the sequence is VFLIIFAGLMYFT.

It belongs to the cytochrome b family. In terms of assembly, the main subunits of complex b-c1 are: cytochrome b, cytochrome c1 and the Rieske protein. Heme b is required as a cofactor. Requires heme c as cofactor. The protein is post-translationally processed into cytochrome b and c1. This occurs by processing between residues 434 and 435 without processing between cytochrome b and the N-terminal of the putative signal sequence domain.

The protein resides in the cell inner membrane. In terms of biological role, component of the ubiquinol-cytochrome c reductase complex (complex III or cytochrome b-c1 complex), which is a respiratory chain that generates an electrochemical potential coupled to ATP synthesis. c1 functions as an electron donor to cytochrome c. In Bradyrhizobium diazoefficiens (strain JCM 10833 / BCRC 13528 / IAM 13628 / NBRC 14792 / USDA 110), this protein is Cytochrome b/c1 (fbcH).